The following is a 198-amino-acid chain: Large ribosomal subunit protein bL25 (198 aa).

Belongs to the bacterial ribosomal protein bL25 family. CTC subfamily. Part of the 50S ribosomal subunit; part of the 5S rRNA/L5/L18/L25 subcomplex. Contacts the 5S rRNA. Binds to the 5S rRNA independently of L5 and L18.

Its function is as follows. This is one of the proteins that binds to the 5S RNA in the ribosome where it forms part of the central protuberance. The protein is Large ribosomal subunit protein bL25 of Lysinibacillus sphaericus (strain C3-41).